Consider the following 131-residue polypeptide: Profilin-4 (131 aa).

Cys-13 and Cys-115 form a disulfide bridge. Positions 81–97 (AVIRGKKGAGGITVKKT) match the Involved in PIP2 interaction motif. The residue at position 111 (Thr-111) is a Phosphothreonine.

This sequence belongs to the profilin family. Occurs in many kinds of cells as a complex with monomeric actin in a 1:1 ratio. Phosphorylated by MAP kinases.

The protein resides in the cytoplasm. Its subcellular location is the cytoskeleton. Functionally, binds to actin and affects the structure of the cytoskeleton. At high concentrations, profilin prevents the polymerization of actin, whereas it enhances it at low concentrations. In Olea europaea (Common olive), this protein is Profilin-4.